We begin with the raw amino-acid sequence, 105 residues long: Vacuolar ATPase assembly integral membrane protein VMA21 homolog (105 aa).

Residues methionine 1–serine 26 are disordered. Topologically, residues methionine 1 to leucine 36 are cytoplasmic. The chain crosses the membrane as a helical span at residues phenylalanine 37 to valine 57. Residues leucine 58 to lysine 68 are Lumenal-facing. Residues valine 69 to isoleucine 89 traverse the membrane as a helical segment. The Cytoplasmic portion of the chain corresponds to tyrosine 90–aspartate 105.

The protein belongs to the VMA21 family.

The protein resides in the endoplasmic reticulum membrane. It localises to the endoplasmic reticulum-Golgi intermediate compartment membrane. Its subcellular location is the cytoplasmic vesicle. It is found in the COPII-coated vesicle membrane. Required for the assembly of the V0 complex of the vacuolar ATPase (V-ATPase) in the endoplasmic reticulum. The protein is Vacuolar ATPase assembly integral membrane protein VMA21 homolog of Drosophila yakuba (Fruit fly).